The chain runs to 89 residues: Small membrane A-kinase anchor protein (89 aa).

A disordered region spans residues 1–29 (MGCMKSKRRDPTQNSDSSEKVDGKPGKHG). Residue glycine 2 is the site of N-myristoyl glycine attachment. Residues 17-29 (SSEKVDGKPGKHG) are compositionally biased toward basic and acidic residues.

The protein belongs to the small membrane AKAP family. Post-translationally, may be palmitoylated at Cys-3.

The protein resides in the cell membrane. In terms of biological role, binds to type I regulatory subunits of protein kinase A and may anchor/target them to the plasma membrane. This Danio rerio (Zebrafish) protein is Small membrane A-kinase anchor protein.